The sequence spans 61 residues: Large ribosomal subunit protein bL32 (61 aa).

The span at 1-16 shows a compositional bias: basic residues; sequence MAVPKRKTSPSKRGMR. Residues 1-33 form a disordered region; sequence MAVPKRKTSPSKRGMRRSADGLKAPTYVEDKNS.

This sequence belongs to the bacterial ribosomal protein bL32 family.

The sequence is that of Large ribosomal subunit protein bL32 from Allorhizobium ampelinum (strain ATCC BAA-846 / DSM 112012 / S4) (Agrobacterium vitis (strain S4)).